Here is a 420-residue protein sequence, read N- to C-terminus: RING finger protein 39 (420 aa).

An RING-type zinc finger spans residues 88–135 (CPLCGGSFEDPVLLACEHSFCRACLARRWGTPPATDTEASPTACPCCG). Disordered regions lie at residues 166–186 (PGAR…CLDP) and 246–265 (DRRS…DGPK). Positions 210 to 420 (DDLPEDYPVV…APLRIVPAES (211 aa)) constitute a B30.2/SPRY domain.

The protein resides in the cytoplasm. It carries out the reaction S-ubiquitinyl-[E2 ubiquitin-conjugating enzyme]-L-cysteine + [acceptor protein]-L-lysine = [E2 ubiquitin-conjugating enzyme]-L-cysteine + N(6)-ubiquitinyl-[acceptor protein]-L-lysine.. It participates in protein modification; protein ubiquitination. In terms of biological role, plays an inhibitory role in anti-RNA viral innate immunity by targeting the adapter DDX3X and promoting its 'Lys-48'-linked polyubiquitination. Alternatively, enhances the cGAS-STING pathway activation by promoting 'Lys-63'-linked ubiquitination of STING1, facilitating the STING1-TBK1 complex formation and STING1 activation. This is RING finger protein 39 (RNF39) from Macaca mulatta (Rhesus macaque).